Consider the following 412-residue polypeptide: 3,4-dihydroxybenzoate--[aryl-carrier protein] ligase (412 aa).

Belongs to the ATP-dependent AMP-binding enzyme family.

The catalysed reaction is holo-[aryl-carrier protein] + 3,4-dihydroxybenzoate + ATP = 3,4-dihydroxybenzoyl-[aryl-carrier protein] + AMP + diphosphate. The enzyme catalyses 3,4-dihydroxybenzoate + ATP + H(+) = 3,4-dihydroxybenzoyl-5'-AMP + diphosphate. It carries out the reaction 3,4-dihydroxybenzoyl-5'-AMP + holo-[aryl-carrier protein] = 3,4-dihydroxybenzoyl-[aryl-carrier protein] + AMP + H(+). It functions in the pathway siderophore biosynthesis; petrobactin biosynthesis. ATP-pyrophosphate exchange is inhibited in vitro by nonhydrolyzable acylsulfamate analogs that mimic the AsbC-bound intermediate 3,4-dihydroxybenzoyl-AMP. In terms of biological role, involved in the biosynthesis of petrobactin, a catecholate siderophore that functions in both iron acquisition and virulence. Catalyzes the adenylation of 3,4-dihydroxybenzoate (3,4-DHBA) to the corresponding AMP ester, followed by the transfer of the activated unit to the phosphopantetheine thiol of the aryl-carrier protein AsbD. The sequence is that of 3,4-dihydroxybenzoate--[aryl-carrier protein] ligase from Bacillus anthracis.